A 512-amino-acid polypeptide reads, in one-letter code: tRNA-guanine(15) transglycosylase (512 aa).

Residue Asp-85 is the Nucleophile of the active site. Residue Asp-120 coordinates substrate. The Zn(2+) site is built by Cys-272, Cys-274, and Cys-277.

The protein belongs to the archaeosine tRNA-ribosyltransferase family. It depends on Zn(2+) as a cofactor.

The catalysed reaction is guanosine(15) in tRNA + 7-cyano-7-deazaguanine = 7-cyano-7-carbaguanosine(15) in tRNA + guanine. It functions in the pathway tRNA modification; archaeosine-tRNA biosynthesis. Its function is as follows. Exchanges the guanine residue with 7-cyano-7-deazaguanine (preQ0) at position 15 in the dihydrouridine loop (D-loop) of archaeal tRNAs. This Aeropyrum pernix (strain ATCC 700893 / DSM 11879 / JCM 9820 / NBRC 100138 / K1) protein is tRNA-guanine(15) transglycosylase.